Consider the following 926-residue polypeptide: Translation initiation factor IF-2 (926 aa).

Disordered regions lie at residues 1–185 and 200–299; these read MTDS…EEVE and EDKA…RRRG. 2 stretches are compositionally biased toward low complexity: residues 13–24 and 70–96; these read TGKKTLTLKPTG and APAT…AAPQ. The segment covering 110-133 has biased composition (polar residues); that stretch reads TNQYSQQRHPGQQNRPQASSQPSR. The segment covering 151–185 has biased composition (basic and acidic residues); it reads MDARRRALAEAQVREVEDAKRRAEEEVRRQAEEVE. Residues 211–251 are compositionally biased toward low complexity; that stretch reads APEPVAEPVAPVAETPRAADPAPRAPSPAGAKPAAGAPAPS. Residues 424-591 form the tr-type G domain; the sequence is SRPPVVTIMG…AVLLQAEILD (168 aa). The G1 stretch occupies residues 433 to 440; it reads GHVDHGKT. A GTP-binding site is contributed by 433–440; that stretch reads GHVDHGKT. The tract at residues 458-462 is G2; sequence GITQH. Residues 479–482 are G3; the sequence is DTPG. Residues 479–483 and 533–536 each bind GTP; these read DTPGH and NKID. The segment at 533–536 is G4; sequence NKID. Positions 569-571 are G5; it reads SAK.

This sequence belongs to the TRAFAC class translation factor GTPase superfamily. Classic translation factor GTPase family. IF-2 subfamily.

The protein localises to the cytoplasm. In terms of biological role, one of the essential components for the initiation of protein synthesis. Protects formylmethionyl-tRNA from spontaneous hydrolysis and promotes its binding to the 30S ribosomal subunits. Also involved in the hydrolysis of GTP during the formation of the 70S ribosomal complex. This chain is Translation initiation factor IF-2, found in Allorhizobium ampelinum (strain ATCC BAA-846 / DSM 112012 / S4) (Agrobacterium vitis (strain S4)).